We begin with the raw amino-acid sequence, 210 residues long: Probable nicotinate-nucleotide adenylyltransferase (210 aa).

This sequence belongs to the NadD family.

It catalyses the reaction nicotinate beta-D-ribonucleotide + ATP + H(+) = deamido-NAD(+) + diphosphate. The protein operates within cofactor biosynthesis; NAD(+) biosynthesis; deamido-NAD(+) from nicotinate D-ribonucleotide: step 1/1. Its function is as follows. Catalyzes the reversible adenylation of nicotinate mononucleotide (NaMN) to nicotinic acid adenine dinucleotide (NaAD). The chain is Probable nicotinate-nucleotide adenylyltransferase from Methylococcus capsulatus (strain ATCC 33009 / NCIMB 11132 / Bath).